The following is a 118-amino-acid chain: Light-harvesting protein B-800/850 gamma chain (118 aa).

Seems to be required for the LH-II stabilization. The polypeptide is Light-harvesting protein B-800/850 gamma chain (pucE) (Rhodobacter capsulatus (Rhodopseudomonas capsulata)).